Reading from the N-terminus, the 459-residue chain is FBD-associated F-box protein At4g13985 (459 aa).

Residues 18 to 64 (VDRLRNLPDCLLFKILLNLPTKDVVKLSVLSRRWRNVWRYVPGLDLE) enclose the F-box domain. The 55-residue stretch at 375–429 (KEGANILPGPRRFLTSLEYVKIAKPMAAEASEIKLKLVSYFLENSTILKKLTLCL) folds into the FBD domain.

In Arabidopsis thaliana (Mouse-ear cress), this protein is FBD-associated F-box protein At4g13985.